The sequence spans 462 residues: CCA-adding enzyme (462 aa).

ATP is bound by residues serine 54 and arginine 57. 2 residues coordinate CTP: serine 54 and arginine 57. Positions 66, 68, and 117 each coordinate Mg(2+). The ATP site is built by histidine 140, lysine 160, and tyrosine 169. Positions 140, 160, and 169 each coordinate CTP.

Belongs to the tRNA nucleotidyltransferase/poly(A) polymerase family. Archaeal CCA-adding enzyme subfamily. As to quaternary structure, homodimer. Requires Mg(2+) as cofactor.

The catalysed reaction is a tRNA precursor + 2 CTP + ATP = a tRNA with a 3' CCA end + 3 diphosphate. The enzyme catalyses a tRNA with a 3' CCA end + 2 CTP + ATP = a tRNA with a 3' CCACCA end + 3 diphosphate. Its function is as follows. Catalyzes the addition and repair of the essential 3'-terminal CCA sequence in tRNAs without using a nucleic acid template. Adds these three nucleotides in the order of C, C, and A to the tRNA nucleotide-73, using CTP and ATP as substrates and producing inorganic pyrophosphate. tRNA 3'-terminal CCA addition is required both for tRNA processing and repair. Also involved in tRNA surveillance by mediating tandem CCA addition to generate a CCACCA at the 3' terminus of unstable tRNAs. While stable tRNAs receive only 3'-terminal CCA, unstable tRNAs are marked with CCACCA and rapidly degraded. The polypeptide is CCA-adding enzyme (Halorubrum lacusprofundi (strain ATCC 49239 / DSM 5036 / JCM 8891 / ACAM 34)).